Here is a 510-residue protein sequence, read N- to C-terminus: Outer spore wall protein 7 (510 aa).

Residues 1–23 (MKAVFKVTTALLACVFIARYLVC) form the signal peptide. The interval 167 to 195 (FETDSETEDYEDDENENEDEDEDEDEDDV) is disordered. The span at 169–195 (TDSETEDYEDDENENEDEDEDEDEDDV) shows a compositional bias: acidic residues. The residue at position 354 (Tyr-354) is a Phosphotyrosine.

It belongs to the OSW/SHE family.

Involved in spore wall assembly. This chain is Outer spore wall protein 7, found in Saccharomyces cerevisiae (strain ATCC 204508 / S288c) (Baker's yeast).